We begin with the raw amino-acid sequence, 70 residues long: Testis-expressed protein 53 (70 aa).

As to expression, expressed in Testis.

The chain is Testis-expressed protein 53 from Homo sapiens (Human).